A 51-amino-acid polypeptide reads, in one-letter code: uncharacterized protein (51 aa).

The disordered stretch occupies residues 1–51; the sequence is MKRKAEVNEAIKNNNTPTESMDPNSYKTQYHDDPNFRGANRNSKQGQQGGM. Polar residues-rich tracts occupy residues 11-28 and 40-51; these read IKNNNTPTESMDPNSYKT and NRNSKQGQQGGM.

This is an uncharacterized protein from Bacillus subtilis (strain 168).